The sequence spans 421 residues: Gamma-glutamyl phosphate reductase (421 aa).

It belongs to the gamma-glutamyl phosphate reductase family.

It is found in the cytoplasm. The catalysed reaction is L-glutamate 5-semialdehyde + phosphate + NADP(+) = L-glutamyl 5-phosphate + NADPH + H(+). The protein operates within amino-acid biosynthesis; L-proline biosynthesis; L-glutamate 5-semialdehyde from L-glutamate: step 2/2. In terms of biological role, catalyzes the NADPH-dependent reduction of L-glutamate 5-phosphate into L-glutamate 5-semialdehyde and phosphate. The product spontaneously undergoes cyclization to form 1-pyrroline-5-carboxylate. The polypeptide is Gamma-glutamyl phosphate reductase (Acinetobacter baumannii (strain AYE)).